An 84-amino-acid polypeptide reads, in one-letter code: Defensin-like protein 37 (84 aa).

The N-terminal stretch at 1–24 (MAVKLIYLFLFLYIALLISGRTMS) is a signal peptide. 3 disulfide bridges follow: Cys-46–Cys-67, Cys-52–Cys-79, and Cys-56–Cys-81.

It belongs to the DEFL family.

Its subcellular location is the secreted. In Arabidopsis thaliana (Mouse-ear cress), this protein is Defensin-like protein 37 (EDA21).